The chain runs to 146 residues: D-aminoacyl-tRNA deacylase (146 aa).

Residues 137 to 138 (GP) carry the Gly-cisPro motif, important for rejection of L-amino acids motif.

It belongs to the DTD family. In terms of assembly, homodimer.

It is found in the cytoplasm. It carries out the reaction glycyl-tRNA(Ala) + H2O = tRNA(Ala) + glycine + H(+). The catalysed reaction is a D-aminoacyl-tRNA + H2O = a tRNA + a D-alpha-amino acid + H(+). Its function is as follows. An aminoacyl-tRNA editing enzyme that deacylates mischarged D-aminoacyl-tRNAs. Also deacylates mischarged glycyl-tRNA(Ala), protecting cells against glycine mischarging by AlaRS. Acts via tRNA-based rather than protein-based catalysis; rejects L-amino acids rather than detecting D-amino acids in the active site. By recycling D-aminoacyl-tRNA to D-amino acids and free tRNA molecules, this enzyme counteracts the toxicity associated with the formation of D-aminoacyl-tRNA entities in vivo and helps enforce protein L-homochirality. This chain is D-aminoacyl-tRNA deacylase, found in Deinococcus deserti (strain DSM 17065 / CIP 109153 / LMG 22923 / VCD115).